Reading from the N-terminus, the 267-residue chain is DNA repair protein RecO (267 aa).

It belongs to the RecO family.

Its function is as follows. Involved in DNA repair and RecF pathway recombination. This Moorella thermoacetica (strain ATCC 39073 / JCM 9320) protein is DNA repair protein RecO.